The primary structure comprises 244 residues: Large ribosomal subunit protein uL3 (244 aa).

The protein belongs to the universal ribosomal protein uL3 family. As to quaternary structure, part of the 50S ribosomal subunit. Forms a cluster with proteins L14 and L19.

One of the primary rRNA binding proteins, it binds directly near the 3'-end of the 23S rRNA, where it nucleates assembly of the 50S subunit. This is Large ribosomal subunit protein uL3 from Aquifex pyrophilus.